A 122-amino-acid chain; its full sequence is MYSMAFLASSGLVANSSATVFKLNRALNLLAKTVLPDLLTKMSLSCSRVHSSTFSWKCFSKLVDMFFFFFLAWYVRRTTVYPNLNLELPSNIHVYSLDLPYVIYMIKTFQLIEKNFLSSHAG.

An N-terminal signal peptide occupies residues 1-18 (MYSMAFLASSGLVANSSA). A glycan (N-linked (GlcNAc...) asparagine) is linked at Asn-15.

This is an uncharacterized protein from Saccharomyces cerevisiae (strain ATCC 204508 / S288c) (Baker's yeast).